A 171-amino-acid polypeptide reads, in one-letter code: Peptide deformylase (171 aa).

Residues cysteine 92 and histidine 134 each coordinate Fe cation. Glutamate 135 is a catalytic residue. Fe cation is bound at residue histidine 138.

This sequence belongs to the polypeptide deformylase family. Fe(2+) is required as a cofactor.

The enzyme catalyses N-terminal N-formyl-L-methionyl-[peptide] + H2O = N-terminal L-methionyl-[peptide] + formate. Functionally, removes the formyl group from the N-terminal Met of newly synthesized proteins. Requires at least a dipeptide for an efficient rate of reaction. N-terminal L-methionine is a prerequisite for activity but the enzyme has broad specificity at other positions. This Polynucleobacter necessarius subsp. necessarius (strain STIR1) protein is Peptide deformylase.